The sequence spans 363 residues: MSGNTYGKLFTVTTAGESHGPALVAIVDGCPPGLEISLADLQHDLDRRKPGTSRHTTQRQEADEVEILSGVFEGRTTGCSIGLLIRNTDQKSKDYSAIKDLFRPAHADYTYHHKYGIRDYRGGGRSSARETAMRVAAGAIAKKFLATQGITVRGYMSQLGPIEIPFKTWESVEQNAFFSPDPDKVPELEAYMDQLRRDQDSVGAKITVVAEGVMPGLGEPIFDRLDAELAHALMSINAVKGVEIGAGFASVAQRGTEHRDELTPEGFLSNNAGGILGGISSGQPIVAHLALKPTSSITTPGRSIDVDGNPVDVITKGRHDPCVGIRATPIAEAMMAIALMDHLLRHRAQNADVQVNTPVLGQR.

Residues Arg48 and Arg54 each coordinate NADP(+). Residues 125–127 (RSS), 237–238 (NA), Gly277, 292–296 (KPTSS), and Arg318 contribute to the FMN site.

This sequence belongs to the chorismate synthase family. As to quaternary structure, homotetramer. The cofactor is FMNH2.

The enzyme catalyses 5-O-(1-carboxyvinyl)-3-phosphoshikimate = chorismate + phosphate. Its pathway is metabolic intermediate biosynthesis; chorismate biosynthesis; chorismate from D-erythrose 4-phosphate and phosphoenolpyruvate: step 7/7. Functionally, catalyzes the anti-1,4-elimination of the C-3 phosphate and the C-6 proR hydrogen from 5-enolpyruvylshikimate-3-phosphate (EPSP) to yield chorismate, which is the branch point compound that serves as the starting substrate for the three terminal pathways of aromatic amino acid biosynthesis. This reaction introduces a second double bond into the aromatic ring system. In Pseudomonas putida (strain ATCC 700007 / DSM 6899 / JCM 31910 / BCRC 17059 / LMG 24140 / F1), this protein is Chorismate synthase.